The following is a 129-amino-acid chain: Lysozyme C (129 aa).

Residues 1–129 (KIYTRCELAA…VSKWIKDCKL (129 aa)) enclose the C-type lysozyme domain. Intrachain disulfides connect C6/C127, C30/C115, C64/C80, and C76/C94. Residues E35 and D52 contribute to the active site.

This sequence belongs to the glycosyl hydrolase 22 family. In terms of assembly, monomer.

Its subcellular location is the secreted. The catalysed reaction is Hydrolysis of (1-&gt;4)-beta-linkages between N-acetylmuramic acid and N-acetyl-D-glucosamine residues in a peptidoglycan and between N-acetyl-D-glucosamine residues in chitodextrins.. Its function is as follows. Lysozymes have primarily a bacteriolytic function; those in tissues and body fluids are associated with the monocyte-macrophage system and enhance the activity of immunoagents. This chain is Lysozyme C (LYZ), found in Crax fasciolata (Bare-faced curassow).